Consider the following 473-residue polypeptide: Cannabinoid receptor 1 (473 aa).

Residues 1–118 (MKSILDGLAD…CFMILTASQQ (118 aa)) are Extracellular-facing. The interval 2–23 (KSILDGLADTTFRTITTDLLYM) is required for mitochondrial localization. 2 N-linked (GlcNAc...) asparagine glycosylation sites follow: N79 and N85. A helical membrane pass occupies residues 119-144 (LIIAVLSLTLGTFTVLENFLVLCVIL). Residues 145-156 (QSRTLRCRPSYH) are Cytoplasmic-facing. The chain crosses the membrane as a helical span at residues 157 to 177 (FIGSLAVADLLGSVIFVYSFL). Residues 178 to 189 (DFHVFHRKDSSN) lie on the Extracellular side of the membrane. Residues 190-214 (VFLFKLGGVTASFTASVGSLFLTAI) traverse the membrane as a helical segment. Topologically, residues 215–234 (DRYISIHRPLAYKRIVTRTK) are cytoplasmic. A helical transmembrane segment spans residues 235-257 (AVIAFCVMWTIAIIIAVLPLLGW). The Extracellular portion of the chain corresponds to 258-275 (NCKKLKSVCSDIFPLIDE). Residues 276 to 301 (NYLMFWIGVTSILLLFIVYAYVYILW) traverse the membrane as a helical segment. The Cytoplasmic segment spans residues 302 to 346 (KAHSHAVRMLQRGTQKSIIIHTSEDGKVQITRPEQTRMDIRLAKT). A helical transmembrane segment spans residues 347-367 (LVLILVVLIICWGPLLAIMVY). Topologically, residues 368-379 (DVFGKMNNPIKT) are extracellular. Residues 380-401 (VFAFCSMLCLMDSTVNPIIYAL) traverse the membrane as a helical segment. Over 402–473 (RSQDLRHAFL…VSTETSGEAV (72 aa)) the chain is Cytoplasmic. A lipid anchor (S-palmitoyl cysteine) is attached at C417.

The protein belongs to the G-protein coupled receptor 1 family. In terms of processing, palmitoylation at Cys-417 is important for recruitment at both plasma membrane and lipid rafts and association with G protein alpha subunits.

It is found in the cell membrane. Its subcellular location is the mitochondrion outer membrane. The protein resides in the cell projection. It localises to the axon. The protein localises to the presynapse. With respect to regulation, hemopressin, a peptide derived from hemoglobin subunit alpha (HBA1 and/or HBA2), acts as an antagonist peptide: hemopressin-binding efficiently blocks cannabinoid receptor CNR1 and subsequent signaling. Its function is as follows. G-protein coupled receptor for cannabinoids. Mediates many cannabinoid-induced effects in the central nervous system (CNS), as well as in peripheral tissues. Regulates cellular respiration and energy production in response to cannabinoids. Signaling typically involves reduction in cyclic AMP. This chain is Cannabinoid receptor 1 (CNR1), found in Taricha granulosa (Roughskin newt).